The primary structure comprises 351 residues: Phosphoribosylformylglycinamidine cyclo-ligase (351 aa).

The protein belongs to the AIR synthase family.

Its subcellular location is the cytoplasm. The enzyme catalyses 2-formamido-N(1)-(5-O-phospho-beta-D-ribosyl)acetamidine + ATP = 5-amino-1-(5-phospho-beta-D-ribosyl)imidazole + ADP + phosphate + H(+). The protein operates within purine metabolism; IMP biosynthesis via de novo pathway; 5-amino-1-(5-phospho-D-ribosyl)imidazole from N(2)-formyl-N(1)-(5-phospho-D-ribosyl)glycinamide: step 2/2. The protein is Phosphoribosylformylglycinamidine cyclo-ligase of Burkholderia multivorans (strain ATCC 17616 / 249).